A 90-amino-acid chain; its full sequence is MVKNSFIPVLSQEKKGKNPGLVEFQIFQFTNRIRRLTSHFELHPKDYSSQTGLRKILGKRQRLLSYLSKKDGIQYKKLINQFDIRQSQIR.

Belongs to the universal ribosomal protein uS15 family. As to quaternary structure, part of the 30S ribosomal subunit.

Its subcellular location is the plastid. It is found in the chloroplast. The polypeptide is Small ribosomal subunit protein uS15c (rps15) (Phaseolus vulgaris (Kidney bean)).